Consider the following 24-residue polypeptide: General odorant-binding protein (24 aa).

This sequence belongs to the PBP/GOBP family. As to quaternary structure, homodimer. Antenna.

Its function is as follows. Present in the aqueous fluid surrounding olfactory sensory dendrites and are thought to aid in the capture and transport of hydrophobic odorants into and through this fluid. This is General odorant-binding protein from Antheraea polyphemus (Polyphemus moth).